Here is a 968-residue protein sequence, read N- to C-terminus: RNA polymerase-associated protein RapA (968 aa).

The Helicase ATP-binding domain occupies 164–334 (DVGRRHAPRV…FARLRLLDPD (171 aa)). 177-184 (DEVGLGKT) is a binding site for ATP. The DEAH box motif lies at 280–283 (DEAH). One can recognise a Helicase C-terminal domain in the interval 490–643 (RVEWLMGYLT…HTCPTGRAVY (154 aa)).

It belongs to the SNF2/RAD54 helicase family. RapA subfamily. In terms of assembly, interacts with the RNAP. Has a higher affinity for the core RNAP than for the holoenzyme. Its ATPase activity is stimulated by binding to RNAP.

Functionally, transcription regulator that activates transcription by stimulating RNA polymerase (RNAP) recycling in case of stress conditions such as supercoiled DNA or high salt concentrations. Probably acts by releasing the RNAP, when it is trapped or immobilized on tightly supercoiled DNA. Does not activate transcription on linear DNA. Probably not involved in DNA repair. This Erwinia tasmaniensis (strain DSM 17950 / CFBP 7177 / CIP 109463 / NCPPB 4357 / Et1/99) protein is RNA polymerase-associated protein RapA.